We begin with the raw amino-acid sequence, 362 residues long: Chorismate synthase (362 aa).

Residues Arg48 and Arg54 each coordinate NADP(+). Residues 125 to 127 (RSS), 241 to 242 (NA), Gly286, 301 to 305 (KPTSS), and Arg327 contribute to the FMN site.

This sequence belongs to the chorismate synthase family. As to quaternary structure, homotetramer. The cofactor is FMNH2.

The catalysed reaction is 5-O-(1-carboxyvinyl)-3-phosphoshikimate = chorismate + phosphate. Its pathway is metabolic intermediate biosynthesis; chorismate biosynthesis; chorismate from D-erythrose 4-phosphate and phosphoenolpyruvate: step 7/7. Its function is as follows. Catalyzes the anti-1,4-elimination of the C-3 phosphate and the C-6 proR hydrogen from 5-enolpyruvylshikimate-3-phosphate (EPSP) to yield chorismate, which is the branch point compound that serves as the starting substrate for the three terminal pathways of aromatic amino acid biosynthesis. This reaction introduces a second double bond into the aromatic ring system. The chain is Chorismate synthase from Paramagnetospirillum magneticum (strain ATCC 700264 / AMB-1) (Magnetospirillum magneticum).